The sequence spans 100 residues: Integration host factor subunit alpha (100 aa).

Residues 53-72 (FQLRDKPQRPGRNPKTGEEV) form a disordered region.

The protein belongs to the bacterial histone-like protein family. In terms of assembly, heterodimer of an alpha and a beta chain.

Its function is as follows. This protein is one of the two subunits of integration host factor, a specific DNA-binding protein that functions in genetic recombination as well as in transcriptional and translational control. This chain is Integration host factor subunit alpha, found in Neisseria meningitidis serogroup C (strain 053442).